A 437-amino-acid polypeptide reads, in one-letter code: Phosphoglucosamine mutase (437 aa).

S101 (phosphoserine intermediate) is an active-site residue. Mg(2+) is bound by residues S101, D234, D236, and D238. S101 carries the post-translational modification Phosphoserine.

This sequence belongs to the phosphohexose mutase family. Mg(2+) is required as a cofactor. Activated by phosphorylation.

It carries out the reaction alpha-D-glucosamine 1-phosphate = D-glucosamine 6-phosphate. In terms of biological role, catalyzes the conversion of glucosamine-6-phosphate to glucosamine-1-phosphate. This Thermus thermophilus (strain ATCC 27634 / DSM 579 / HB8) protein is Phosphoglucosamine mutase.